The sequence spans 125 residues: Small ribosomal subunit protein eS8 (125 aa).

The protein belongs to the eukaryotic ribosomal protein eS8 family. As to quaternary structure, part of the 30S ribosomal subunit.

The sequence is that of Small ribosomal subunit protein eS8 from Methanosarcina mazei (strain ATCC BAA-159 / DSM 3647 / Goe1 / Go1 / JCM 11833 / OCM 88) (Methanosarcina frisia).